Consider the following 480-residue polypeptide: Protein nucleotidyltransferase YdiU (480 aa).

ATP contacts are provided by Gly86, Gly88, Arg89, Lys109, Asp121, Gly122, Arg172, and Arg179. Asp248 (proton acceptor) is an active-site residue. 2 residues coordinate Mg(2+): Asn249 and Asp258. Asp258 is a binding site for ATP.

The protein belongs to the SELO family. It depends on Mg(2+) as a cofactor. Mn(2+) serves as cofactor.

It catalyses the reaction L-seryl-[protein] + ATP = 3-O-(5'-adenylyl)-L-seryl-[protein] + diphosphate. The enzyme catalyses L-threonyl-[protein] + ATP = 3-O-(5'-adenylyl)-L-threonyl-[protein] + diphosphate. The catalysed reaction is L-tyrosyl-[protein] + ATP = O-(5'-adenylyl)-L-tyrosyl-[protein] + diphosphate. It carries out the reaction L-histidyl-[protein] + UTP = N(tele)-(5'-uridylyl)-L-histidyl-[protein] + diphosphate. It catalyses the reaction L-seryl-[protein] + UTP = O-(5'-uridylyl)-L-seryl-[protein] + diphosphate. The enzyme catalyses L-tyrosyl-[protein] + UTP = O-(5'-uridylyl)-L-tyrosyl-[protein] + diphosphate. In terms of biological role, nucleotidyltransferase involved in the post-translational modification of proteins. It can catalyze the addition of adenosine monophosphate (AMP) or uridine monophosphate (UMP) to a protein, resulting in modifications known as AMPylation and UMPylation. The chain is Protein nucleotidyltransferase YdiU from Salmonella typhi.